A 145-amino-acid chain; its full sequence is U20-hexatoxin-Hi1a (145 aa).

An N-terminal signal peptide occupies residues 1 to 16 (MYQFLIIVILAAFVNG). 2 Thyroglobulin type-1 domains span residues 20 to 73 (KTEC…GQPM) and 82 to 145 (ACEC…RLEC). 5 disulfides stabilise this stretch: Cys-23–Cys-45, Cys-56–Cys-63, Cys-85–Cys-106, Cys-117–Cys-124, and Cys-126–Cys-145.

Expressed by the venom gland.

Its subcellular location is the secreted. Its function is as follows. Cysteine proteinase inhibitor. The protein is U20-hexatoxin-Hi1a of Hadronyche infensa (Fraser island funnel-web spider).